The chain runs to 275 residues: Putative ankyrin repeat protein L715 (275 aa).

ANK repeat units lie at residues 94–123, 124–153, 155–183, and 184–213; these read NINY…DINY, NNGL…NTND, IFQL…SIDP, and IYST…SDST. The disordered stretch occupies residues 253-275; it reads NQDESDVGDDAENDIENDIEDDN. The span at 255 to 275 shows a compositional bias: acidic residues; it reads DESDVGDDAENDIENDIEDDN.

The protein is Putative ankyrin repeat protein L715 of Acanthamoeba polyphaga mimivirus (APMV).